Consider the following 308-residue polypeptide: Aspartate carbamoyltransferase catalytic subunit (308 aa).

Arg-57 and Thr-58 together coordinate carbamoyl phosphate. Residue Lys-86 participates in L-aspartate binding. 3 residues coordinate carbamoyl phosphate: Arg-107, His-135, and Gln-138. 2 residues coordinate L-aspartate: Arg-168 and Arg-229. Carbamoyl phosphate-binding residues include Leu-268 and Pro-269.

The protein belongs to the aspartate/ornithine carbamoyltransferase superfamily. ATCase family. Heterooligomer of catalytic and regulatory chains.

The enzyme catalyses carbamoyl phosphate + L-aspartate = N-carbamoyl-L-aspartate + phosphate + H(+). It functions in the pathway pyrimidine metabolism; UMP biosynthesis via de novo pathway; (S)-dihydroorotate from bicarbonate: step 2/3. Its function is as follows. Catalyzes the condensation of carbamoyl phosphate and aspartate to form carbamoyl aspartate and inorganic phosphate, the committed step in the de novo pyrimidine nucleotide biosynthesis pathway. In Thermococcus gammatolerans (strain DSM 15229 / JCM 11827 / EJ3), this protein is Aspartate carbamoyltransferase catalytic subunit.